Reading from the N-terminus, the 433-residue chain is Histidinol dehydrogenase 2 (433 aa).

Positions 130, 192, and 215 each coordinate NAD(+). Substrate contacts are provided by S238, Q260, and H263. Q260 and H263 together coordinate Zn(2+). Residues E328 and H329 each act as proton acceptor in the active site. Substrate contacts are provided by H329, D362, E416, and H421. D362 contacts Zn(2+). Residue H421 coordinates Zn(2+).

It belongs to the histidinol dehydrogenase family. Zn(2+) is required as a cofactor.

The enzyme catalyses L-histidinol + 2 NAD(+) + H2O = L-histidine + 2 NADH + 3 H(+). Its pathway is amino-acid biosynthesis; L-histidine biosynthesis; L-histidine from 5-phospho-alpha-D-ribose 1-diphosphate: step 9/9. Functionally, catalyzes the sequential NAD-dependent oxidations of L-histidinol to L-histidinaldehyde and then to L-histidine. In Nostoc sp. (strain PCC 7120 / SAG 25.82 / UTEX 2576), this protein is Histidinol dehydrogenase 2 (hisD2).